Here is a 311-residue protein sequence, read N- to C-terminus: tRNA (cytosine(49)-C(5))-methyltransferase (311 aa).

S-adenosyl-L-methionine contacts are provided by residues 118 to 124 (AAAPGSK), Asp-142, Asp-169, and Asp-186. Catalysis depends on Cys-239, which acts as the Nucleophile.

It belongs to the class I-like SAM-binding methyltransferase superfamily. RsmB/NOP family. Forms a tripartite complex with archease and tRNA. Binds only the oligomeric forms of the archease.

The protein localises to the cytoplasm. It carries out the reaction cytidine(49) in tRNA precursor + S-adenosyl-L-methionine = 5-methylcytidine(49) in tRNA precursor + S-adenosyl-L-homocysteine + H(+). Substrate specificity and tendency to aggregate are influenced by archease. Its function is as follows. Catalyzes AdoMet-dependent formation of m5C in tRNA. In the presence of protein archease, specifically methylates the cytosine at position 49 (m5C49) of tRNA. In the absence of archease, catalyzes the formation of m5C at many locations in tRNAs or rRNAs. This chain is tRNA (cytosine(49)-C(5))-methyltransferase, found in Pyrococcus abyssi (strain GE5 / Orsay).